Reading from the N-terminus, the 57-residue chain is Sperm histone (57 aa).

Residues 1 to 57 (MARYRRTRTRSRSRRRRRSRRRRSSRRRRYGRSRRSYRSVGRRRRRYGRRRRRRRRY) are disordered. Phosphothreonine is present on Thr-9.

This sequence belongs to the protamine P1 family. Testis.

It localises to the nucleus. Its subcellular location is the chromosome. In terms of biological role, protamines substitute for histones in the chromatin of sperm during the haploid phase of spermatogenesis. They compact sperm DNA into a highly condensed, stable and inactive complex. The chain is Sperm histone from Coturnix japonica (Japanese quail).